Consider the following 184-residue polypeptide: MIKEILKKADEKMGKTIVALKRELASMKAGRANPAMLDRIEAEYYGSMTPLNQLGNISVPEARVLLIQPWDKSALSAIEKAILKSDLGLNPSNDGTVIRLVIPELTEETRKNIVKTVKKTGEEAKVAIRSIRRDCNDDVKNLKKDDVSEDDIKKAEDDIQKKTDKYIKEIDSIISAKEKEILSI.

Belongs to the RRF family.

It localises to the cytoplasm. In terms of biological role, responsible for the release of ribosomes from messenger RNA at the termination of protein biosynthesis. May increase the efficiency of translation by recycling ribosomes from one round of translation to another. In Clostridium botulinum (strain Okra / Type B1), this protein is Ribosome-recycling factor.